Reading from the N-terminus, the 341-residue chain is S-adenosylmethionine:tRNA ribosyltransferase-isomerase (341 aa).

It belongs to the QueA family. Monomer.

Its subcellular location is the cytoplasm. It catalyses the reaction 7-aminomethyl-7-carbaguanosine(34) in tRNA + S-adenosyl-L-methionine = epoxyqueuosine(34) in tRNA + adenine + L-methionine + 2 H(+). It participates in tRNA modification; tRNA-queuosine biosynthesis. Functionally, transfers and isomerizes the ribose moiety from AdoMet to the 7-aminomethyl group of 7-deazaguanine (preQ1-tRNA) to give epoxyqueuosine (oQ-tRNA). The chain is S-adenosylmethionine:tRNA ribosyltransferase-isomerase from Halothermothrix orenii (strain H 168 / OCM 544 / DSM 9562).